We begin with the raw amino-acid sequence, 201 residues long: Ribosomal RNA large subunit methyltransferase E (201 aa).

The S-adenosyl-L-methionine site is built by glycine 49, tryptophan 51, aspartate 69, aspartate 90, and aspartate 113. Lysine 153 serves as the catalytic Proton acceptor.

The protein belongs to the class I-like SAM-binding methyltransferase superfamily. RNA methyltransferase RlmE family.

It is found in the cytoplasm. The enzyme catalyses uridine(2552) in 23S rRNA + S-adenosyl-L-methionine = 2'-O-methyluridine(2552) in 23S rRNA + S-adenosyl-L-homocysteine + H(+). Its function is as follows. Specifically methylates the uridine in position 2552 of 23S rRNA at the 2'-O position of the ribose in the fully assembled 50S ribosomal subunit. In Desulfotalea psychrophila (strain LSv54 / DSM 12343), this protein is Ribosomal RNA large subunit methyltransferase E.